Reading from the N-terminus, the 224-residue chain is tRNA (guanine-N(7)-)-methyltransferase (224 aa).

E56, E81, D108, and D131 together coordinate S-adenosyl-L-methionine. Residue D131 is part of the active site. Residues K135, D167, and T202 to E205 contribute to the substrate site.

The protein belongs to the class I-like SAM-binding methyltransferase superfamily. TrmB family.

It catalyses the reaction guanosine(46) in tRNA + S-adenosyl-L-methionine = N(7)-methylguanosine(46) in tRNA + S-adenosyl-L-homocysteine. It participates in tRNA modification; N(7)-methylguanine-tRNA biosynthesis. In terms of biological role, catalyzes the formation of N(7)-methylguanine at position 46 (m7G46) in tRNA. The chain is tRNA (guanine-N(7)-)-methyltransferase from Nitrosomonas eutropha (strain DSM 101675 / C91 / Nm57).